Here is a 220-residue protein sequence, read N- to C-terminus: Large ribosomal subunit protein uL3 (220 aa).

Residues 126–158 (GFQGAIKRHGQSRGPMSHGSRYHRRPGSMGMAS) are disordered.

Belongs to the universal ribosomal protein uL3 family. In terms of assembly, part of the 50S ribosomal subunit. Forms a cluster with proteins L14 and L19.

Its function is as follows. One of the primary rRNA binding proteins, it binds directly near the 3'-end of the 23S rRNA, where it nucleates assembly of the 50S subunit. This is Large ribosomal subunit protein uL3 from Macrococcus caseolyticus (strain JCSC5402) (Macrococcoides caseolyticum).